We begin with the raw amino-acid sequence, 79 residues long: NAD(P)H-quinone oxidoreductase subunit L (79 aa).

2 consecutive transmembrane segments (helical) span residues 10-30 (IIIA…IPAV) and 48-68 (GFMY…SPFL).

The protein belongs to the complex I NdhL subunit family. As to quaternary structure, NDH-1 can be composed of about 15 different subunits; different subcomplexes with different compositions have been identified which probably have different functions.

It localises to the cellular thylakoid membrane. The enzyme catalyses a plastoquinone + NADH + (n+1) H(+)(in) = a plastoquinol + NAD(+) + n H(+)(out). It carries out the reaction a plastoquinone + NADPH + (n+1) H(+)(in) = a plastoquinol + NADP(+) + n H(+)(out). Functionally, NDH-1 shuttles electrons from an unknown electron donor, via FMN and iron-sulfur (Fe-S) centers, to quinones in the respiratory and/or the photosynthetic chain. The immediate electron acceptor for the enzyme in this species is believed to be plastoquinone. Couples the redox reaction to proton translocation, and thus conserves the redox energy in a proton gradient. Cyanobacterial NDH-1 also plays a role in inorganic carbon-concentration. This is NAD(P)H-quinone oxidoreductase subunit L from Microcystis aeruginosa (strain NIES-843 / IAM M-2473).